A 382-amino-acid polypeptide reads, in one-letter code: Alanine racemase 1 (382 aa).

Residue Lys39 is the Proton acceptor; specific for D-alanine of the active site. Residue Lys39 is modified to N6-(pyridoxal phosphate)lysine. Arg138 provides a ligand contact to substrate. Tyr265 functions as the Proton acceptor; specific for L-alanine in the catalytic mechanism. Met312 serves as a coordination point for substrate.

Belongs to the alanine racemase family. Pyridoxal 5'-phosphate is required as a cofactor.

It carries out the reaction L-alanine = D-alanine. Its pathway is amino-acid biosynthesis; D-alanine biosynthesis; D-alanine from L-alanine: step 1/1. Its function is as follows. Catalyzes the interconversion of L-alanine and D-alanine. May also act on other amino acids. The sequence is that of Alanine racemase 1 (alr1) from Staphylococcus aureus (strain NCTC 8325 / PS 47).